We begin with the raw amino-acid sequence, 279 residues long: uncharacterized protein (279 aa).

A signal peptide spans 1 to 21 (MKIIRTLFLLLIAVYGSSVVA).

It to E.coli YfcO.

This is an uncharacterized protein from Salmonella typhimurium (strain LT2 / SGSC1412 / ATCC 700720).